We begin with the raw amino-acid sequence, 582 residues long: Fructose-1,6-bisphosphatase class 3 (582 aa).

This sequence belongs to the FBPase class 3 family. It depends on Mn(2+) as a cofactor.

It catalyses the reaction beta-D-fructose 1,6-bisphosphate + H2O = beta-D-fructose 6-phosphate + phosphate. Its pathway is carbohydrate biosynthesis; gluconeogenesis. This chain is Fructose-1,6-bisphosphatase class 3, found in Saccharophagus degradans (strain 2-40 / ATCC 43961 / DSM 17024).